A 42-amino-acid polypeptide reads, in one-letter code: Photosystem I reaction center subunit IX (42 aa).

A helical membrane pass occupies residues 8 to 28 (YLSTAPVIGVLWMTFTAGFII).

It belongs to the PsaJ family.

The protein localises to the plastid. The protein resides in the chloroplast thylakoid membrane. Its function is as follows. May help in the organization of the PsaE and PsaF subunits. The chain is Photosystem I reaction center subunit IX from Pyropia yezoensis (Susabi-nori).